A 143-amino-acid chain; its full sequence is Cold shock domain-containing protein CG9705 (143 aa).

A disordered region spans residues 1-30; it reads MTEPRTPEKLLAAKPPVLHHNSHSPNASLQ. Residues Ser22, Ser24, Ser28, and Ser33 each carry the phosphoserine modification. The 68-residue stretch at 54–121 folds into the CSD domain; sequence VVTGMVKSFS…KHQAVHVQIS (68 aa). Phosphoserine occurs at positions 139 and 140.

This Drosophila melanogaster (Fruit fly) protein is Cold shock domain-containing protein CG9705.